The sequence spans 304 residues: Cell surface-binding protein OPG105 (304 aa).

In terms of domain architecture, Alpha-carbonic anhydrase spans 1-235 (MPQQLSPINI…NDDTQVYYSG (235 aa)). Over 1–275 (MPQQLSPINI…YQKYIEGNKT (275 aa)) the chain is Virion surface. A helical transmembrane segment spans residues 276–294 (FAIIAIVFVFILTAILFLM). Residues 295 to 304 (SQRYSREKQN) are Intravirion-facing.

It belongs to the alpha-carbonic anhydrase family. Homodimer; disulfide-linked. Post-translationally, apparently non-glycosylated.

It is found in the virion membrane. Binds to chondroitin sulfate on the cell surface to provide virion attachment to target cell. The chain is Cell surface-binding protein OPG105 (OPG105) from Monkeypox virus (strain Zaire-96-I-16) (MPX).